Consider the following 295-residue polypeptide: Cytidine deaminase (295 aa).

CMP/dCMP-type deaminase domains lie at 48–168 (SDKE…FGPA) and 187–295 (DDKD…FVNV). 89–91 (NME) is a binding site for substrate. His102 contacts Zn(2+). The active-site Proton donor is Glu104. Residues Cys129 and Cys132 each coordinate Zn(2+).

It belongs to the cytidine and deoxycytidylate deaminase family. Homodimer. Zn(2+) is required as a cofactor.

It carries out the reaction cytidine + H2O + H(+) = uridine + NH4(+). It catalyses the reaction 2'-deoxycytidine + H2O + H(+) = 2'-deoxyuridine + NH4(+). Functionally, this enzyme scavenges exogenous and endogenous cytidine and 2'-deoxycytidine for UMP synthesis. The protein is Cytidine deaminase of Vibrio parahaemolyticus serotype O3:K6 (strain RIMD 2210633).